The chain runs to 176 residues: Ribosome maturation factor RimM (176 aa).

The PRC barrel domain occupies Pro100–Leu172.

The protein belongs to the RimM family. As to quaternary structure, binds ribosomal protein uS19.

Its subcellular location is the cytoplasm. In terms of biological role, an accessory protein needed during the final step in the assembly of 30S ribosomal subunit, possibly for assembly of the head region. Essential for efficient processing of 16S rRNA. May be needed both before and after RbfA during the maturation of 16S rRNA. It has affinity for free ribosomal 30S subunits but not for 70S ribosomes. This chain is Ribosome maturation factor RimM, found in Mycobacterium bovis (strain ATCC BAA-935 / AF2122/97).